We begin with the raw amino-acid sequence, 399 residues long: S-adenosylmethionine synthase (399 aa).

Residue His-16 coordinates ATP. Asp-18 serves as a coordination point for Mg(2+). Glu-44 is a K(+) binding site. Residues Glu-57 and Gln-100 each contribute to the L-methionine site. The flexible loop stretch occupies residues 100-110; the sequence is QSPDIAQGVDT. Residues 175–177, 246–247, Asp-255, 261–262, Ala-278, and Lys-282 each bind ATP; these read DGK, KF, and RK. An L-methionine-binding site is contributed by Asp-255. Lys-286 contributes to the L-methionine binding site. An Isoglutamyl lysine isopeptide (Lys-Gln) (interchain with Q-Cter in protein Pup) cross-link involves residue Lys-341.

This sequence belongs to the AdoMet synthase family. In terms of assembly, homotetramer; dimer of dimers. Mg(2+) is required as a cofactor. It depends on K(+) as a cofactor.

It is found in the cytoplasm. It catalyses the reaction L-methionine + ATP + H2O = S-adenosyl-L-methionine + phosphate + diphosphate. The protein operates within amino-acid biosynthesis; S-adenosyl-L-methionine biosynthesis; S-adenosyl-L-methionine from L-methionine: step 1/1. Catalyzes the formation of S-adenosylmethionine (AdoMet) from methionine and ATP. The overall synthetic reaction is composed of two sequential steps, AdoMet formation and the subsequent tripolyphosphate hydrolysis which occurs prior to release of AdoMet from the enzyme. In Mycolicibacterium smegmatis (strain ATCC 700084 / mc(2)155) (Mycobacterium smegmatis), this protein is S-adenosylmethionine synthase.